The sequence spans 284 residues: Hypersensitive-induced response protein 1 (284 aa).

A lipid anchor (N-myristoyl glycine) is attached at Gly2.

As to quaternary structure, interacts with LRR1.

It localises to the cell membrane. Its function is as follows. Positive regulator of hypersensitive response (HR)-like cell death. May be involved in potassium ion channel regulation. The sequence is that of Hypersensitive-induced response protein 1 from Oryza sativa subsp. japonica (Rice).